The sequence spans 228 residues: 7-cyano-7-deazaguanine synthase (228 aa).

7-17 provides a ligand contact to ATP; that stretch reads LSGGMDSLVTT. Cys-187, Cys-195, Cys-198, and Cys-201 together coordinate Zn(2+).

This sequence belongs to the QueC family. The cofactor is Zn(2+).

It carries out the reaction 7-carboxy-7-deazaguanine + NH4(+) + ATP = 7-cyano-7-deazaguanine + ADP + phosphate + H2O + H(+). Its pathway is purine metabolism; 7-cyano-7-deazaguanine biosynthesis. Its function is as follows. Catalyzes the ATP-dependent conversion of 7-carboxy-7-deazaguanine (CDG) to 7-cyano-7-deazaguanine (preQ(0)). In Chlorobium chlorochromatii (strain CaD3), this protein is 7-cyano-7-deazaguanine synthase.